We begin with the raw amino-acid sequence, 123 residues long: MDRVPFCCLLFIGLLNPLLSLPVTDTGERTLQLPVLEEDALRALEELERMALLQTLRQTMGTEAGESPGEAGPSTETPTPRGSMRKAFAGQNSNTVLSRLLARTRKQHKQHGAAPECFWKYCI.

The signal sequence occupies residues 1–20; sequence MDRVPFCCLLFIGLLNPLLS. 2 consecutive propeptides follow at residues 21-104 and 107-109; these read LPVT…LART and QHK. Residues 57–88 are disordered; it reads RQTMGTEAGESPGEAGPSTETPTPRGSMRKAF. Cysteines 117 and 122 form a disulfide.

It belongs to the urotensin-2 family. Brain specific. Predominantly expressed in motoneurons of the brainstem and spinal cord.

The protein localises to the secreted. Highly potent vasoconstrictor. This Mus musculus (Mouse) protein is Urotensin-2 (Uts2).